Here is a 40-residue protein sequence, read N- to C-terminus: Dolichyl-diphosphooligosaccharide--protein glycosyltransferase subunit 4 (40 aa).

Over 1-7 (MITDMQL) the chain is Lumenal. The helical transmembrane segment at 8-28 (AIFSNVLGVFLFLLVVAYHYI) threads the bilayer. Over 29–40 (NANTGKPSAKAK) the chain is Cytoplasmic.

The protein belongs to the OST4 family. As to quaternary structure, component of the oligosaccharyltransferase (OST) complex.

It localises to the endoplasmic reticulum membrane. Its function is as follows. Subunit of the oligosaccharyl transferase (OST) complex that catalyzes the initial transfer of a defined glycan (Glc(3)Man(9)GlcNAc(2) in eukaryotes) from the lipid carrier dolichol-pyrophosphate to an asparagine residue within an Asn-X-Ser/Thr consensus motif in nascent polypeptide chains, the first step in protein N-glycosylation. N-glycosylation occurs cotranslationally and the complex associates with the Sec61 complex at the channel-forming translocon complex that mediates protein translocation across the endoplasmic reticulum (ER). All subunits are required for a maximal enzyme activity. The polypeptide is Dolichyl-diphosphooligosaccharide--protein glycosyltransferase subunit 4 (Drosophila sechellia (Fruit fly)).